The chain runs to 147 residues: Proteinase inhibitor type-2 (147 aa).

Positions 1-25 (MAVHKEVSFVAYLLIVLGMFLYVDA) are cleaved as a signal peptide. 2 repeat units span residues 25-81 (ALGC…DPKN) and 82-141 (PKAC…DEPK). Disulfide bonds link Cys-28–Cys-116, Cys-32–Cys-112, Cys-40–Cys-122, Cys-52–Cys-89, Cys-55–Cys-73, Cys-56–Cys-85, Cys-62–Cys-98, and Cys-115–Cys-133.

This sequence belongs to the protease inhibitor I20 (potato type II proteinase inhibitor) family.

This Solanum tuberosum (Potato) protein is Proteinase inhibitor type-2.